Reading from the N-terminus, the 429-residue chain is MRDELNKGLIDFLKASPTPFHATATLVQHFEAAGFQRLDERDTWAIETGGRYYVTRNDSSIVAIRMGRQSPLTGGIRMVGAHTDSPCLRVKPQPELQRQGFWQLGVEVYGGALLAPWFDRDLSLAGRVTFRRDGKVESQLIDFKLPIAVIPNLAIHLNRTANEGWTINPQNELPPILAQVAGDERADFRALLTDQLAREHGLNADVVLDYELSFYDTQSAAVVGLNGDFLAGARLDNLLSCFAGMQALLNTESDETALLVCTDHEEVGSSSACGADGAMLEQIVQRLLPSSEDYVRTIQKSLLISADNAHGIHPNYADKHDANHGPKLNAGPVIKVNSNQRYATNSETAGFFRHLCMAEEVPVQSFVVRSDMGCGSTIGPITASHLGIRTVDIGLPTFAMHSIRELAGSHDLAHLVKVLGAFYASHELP.

Residues His82, His156, and His401 each coordinate Zn(2+).

The protein belongs to the peptidase M18 family. Zn(2+) is required as a cofactor.

This is Probable M18 family aminopeptidase 2 from Pseudomonas syringae pv. tomato (strain ATCC BAA-871 / DC3000).